Consider the following 125-residue polypeptide: Cardioactive peptide (125 aa).

A signal peptide spans 1–22 (MTVSRVCLLLLVALVYLDCCYA). A propeptide spanning residues 23–42 (ASIPRNFDPRLSEEIVMAPK) is cleaved from the precursor. Cys-47 and Cys-53 are joined by a disulfide. The residue at position 53 (Cys-53) is a Cysteine amide. The propeptide occupies 57-125 (RSQGPPGMPA…RRKQKEAYIQ (69 aa)).

Abdominal perivisceral organ; major neurohemal release site. Expressed in 116 neurons in post-embryonic central nervous system. Nine pairs of cells are observed in the brain, 4.5 pairs in the subesophageal ganglion, three pairs in each thoracic ganglion (T1-T3), three pairs in the first abdominal ganglion (A1), five pairs each in the second to sixth abdominal ganglia (A2-A6) and 7.5 pairs in the terminal ganglion. Expressed in every ganglion in each post-embryonic stage, except in the thoracic ganglia of first- and second-instar larvae. Colocalizes with CAP2b in median neurosecretory cells during the last larval instar through to adults.

Its subcellular location is the secreted. Its function is as follows. Cardioregulatory neurohormone that increases heart beat rate during adult wing inflation; has no effect on beat amplitude. The effect of CCAP is both ino- and chronotropic. This Manduca sexta (Tobacco hawkmoth) protein is Cardioactive peptide.